The following is a 313-amino-acid chain: DNA-directed RNA polymerase subunit alpha (313 aa).

The interval Met-1–Lys-229 is alpha N-terminal domain (alpha-NTD). Positions Ile-243–Lys-313 are alpha C-terminal domain (alpha-CTD).

This sequence belongs to the RNA polymerase alpha chain family. As to quaternary structure, in plastids the minimal PEP RNA polymerase catalytic core is composed of four subunits: alpha, beta, beta', and beta''. When a (nuclear-encoded) sigma factor is associated with the core the holoenzyme is formed, which can initiate transcription.

It localises to the plastid. The protein localises to the chloroplast. The enzyme catalyses RNA(n) + a ribonucleoside 5'-triphosphate = RNA(n+1) + diphosphate. In terms of biological role, DNA-dependent RNA polymerase catalyzes the transcription of DNA into RNA using the four ribonucleoside triphosphates as substrates. In Thalassiosira pseudonana (Marine diatom), this protein is DNA-directed RNA polymerase subunit alpha.